The chain runs to 640 residues: MPILEKAPQKMPVKASSWEELDLPKLPVPPLQQTLATYLQCMQHLVPEEQFRKSQAIVKRFGAPGGLGETLQEKLLERQEKTANWVSEYWLNDMYLNNRLALPVNSSPAVIFARQHFQDTNDQLRFAACLISGVLSYKTLLDSHSLPTDWAKGQLSGQPLCMKQYYRLFSSYRLPGHTQDTLVAQKSSIMPEPEHVIVACCNQFFVLDVVINFRRLSEGDLFTQLRKIVKMASNEDERLPPIGLLTSDGRSEWAKARTVLLKDSTNRDSLDMIERCICLVCLDGPGTGELSDTHRALQLLHGGGCSLNGANRWYDKSLQFVVGRDGTCGVVCEHSPFDGIVLVQCTEHLLKHMMTSNKKLVRADSVSELPAPRRLRLKCSPETQGHLASSAEKLQRIVKNLDFIVYKFDNYGKTFIKKQKYSPDGFIQVALQLAYYRLYQRLVPTYESASIRRFQEGRVDNIRSATPEALAFVQAMTDHKAAMPASEKLQLLQTAMQAHKQYTVMAITGMAIDNHLLALRELARDLCKEPPEMFMDETYLMSNRFVLSTSQVPTTMEMFCCYGPVVPNGNGACYNPQPEAITFCISSFHSCKETSSVEFAEAVGASLVDMRDLCSSRQPADSKPPAPKEKARGPSQAKQS.

Residue S17 is modified to Phosphoserine. The active-site Proton acceptor is H334. A Phosphoserine modification is found at S365. Residues 412 to 424 (GKTF…YSPD), S450, and Q551 each bind CoA. Residues 614–640 (CSSRQPADSKPPAPKEKARGPSQAKQS) are disordered.

This sequence belongs to the carnitine/choline acetyltransferase family. As to quaternary structure, monomer.

The enzyme catalyses choline + acetyl-CoA = acetylcholine + CoA. Functionally, catalyzes the reversible synthesis of acetylcholine (ACh) from acetyl CoA and choline at cholinergic synapses. The chain is Choline O-acetyltransferase (Chat) from Rattus norvegicus (Rat).